Here is a 293-residue protein sequence, read N- to C-terminus: 4-hydroxy-tetrahydrodipicolinate synthase (293 aa).

Residue threonine 45 participates in pyruvate binding. Tyrosine 133 (proton donor/acceptor) is an active-site residue. The active-site Schiff-base intermediate with substrate is lysine 162. Residue isoleucine 204 participates in pyruvate binding.

Belongs to the DapA family. Homotetramer; dimer of dimers.

The protein localises to the cytoplasm. It carries out the reaction L-aspartate 4-semialdehyde + pyruvate = (2S,4S)-4-hydroxy-2,3,4,5-tetrahydrodipicolinate + H2O + H(+). It participates in amino-acid biosynthesis; L-lysine biosynthesis via DAP pathway; (S)-tetrahydrodipicolinate from L-aspartate: step 3/4. Its function is as follows. Catalyzes the condensation of (S)-aspartate-beta-semialdehyde [(S)-ASA] and pyruvate to 4-hydroxy-tetrahydrodipicolinate (HTPA). This chain is 4-hydroxy-tetrahydrodipicolinate synthase, found in Chelativorans sp. (strain BNC1).